We begin with the raw amino-acid sequence, 122 residues long: Large ribosomal subunit protein uL14 (122 aa).

As to quaternary structure, forms a cluster with proteins L3 and L19. In the 70S ribosome, L14 and L19 interact and together make contacts with the 16S rRNA in bridges B5 and B8. Part of the 50S ribosomal subunit.

Binds to 23S rRNA. Forms part of two intersubunit bridges in the 70S ribosome. The sequence is that of Large ribosomal subunit protein uL14 from Rhodopseudomonas palustris (strain ATCC BAA-98 / CGA009).